The chain runs to 250 residues: MGLTTKPLSLKVNAALFDVDGTIIISQPAIAAFWRDFGKDKPYFDAEHVIQVSHGWRTFDAIAKFAPDFANEEYVNKLEAEIPVKYGEKSIEVPGAVKLCNALNALPKEKWAVATSGTRDMAQKWFEHLGIRRPKYFITANDVKQGKPHPEPYLKGRNGLGYPINEQDPSKSKVVVFEDAPAGIAAGKAAGCKIIGIATTFDLDFLKEKGCDIIVKNHESIRVGGYNAETDEVEFIFDDYLYAKDDLLKW.

D18 (nucleophile) is an active-site residue. Residues D18 and D20 each coordinate Mg(2+). D20 functions as the Proton donor in the catalytic mechanism. A Glycyl lysine isopeptide (Lys-Gly) (interchain with G-Cter in ubiquitin) cross-link involves residue K64. Phosphoserine is present on S90. K144 participates in a covalent cross-link: Glycyl lysine isopeptide (Lys-Gly) (interchain with G-Cter in ubiquitin). D179 contacts Mg(2+).

Belongs to the HAD-like hydrolase superfamily. DOG/GPP family. Monomer. Mg(2+) is required as a cofactor.

It localises to the cytoplasm. The protein localises to the nucleus. The catalysed reaction is sn-glycerol 1-phosphate + H2O = glycerol + phosphate. It carries out the reaction sn-glycerol 3-phosphate + H2O = glycerol + phosphate. Its function is as follows. Glycerol-1-phosphate phosphohydrolase involved in glycerol biosynthesis. Plays a role in osmoadaptation. In Saccharomyces cerevisiae (strain ATCC 204508 / S288c) (Baker's yeast), this protein is Glycerol-1-phosphate phosphohydrolase 2.